Reading from the N-terminus, the 316-residue chain is Pantothenate kinase (316 aa).

95-102 (GSVAVGKS) serves as a coordination point for ATP.

Belongs to the prokaryotic pantothenate kinase family.

It is found in the cytoplasm. The catalysed reaction is (R)-pantothenate + ATP = (R)-4'-phosphopantothenate + ADP + H(+). The protein operates within cofactor biosynthesis; coenzyme A biosynthesis; CoA from (R)-pantothenate: step 1/5. The sequence is that of Pantothenate kinase from Cronobacter sakazakii (strain ATCC BAA-894) (Enterobacter sakazakii).